Consider the following 282-residue polypeptide: Protein-export membrane protein SecF (282 aa).

6 helical membrane-spanning segments follow: residues Ile9–Pro29, Glu120–Phe140, Ile149–Ile169, Ala174–Thr194, Lys214–Val234, and Leu236–Ile256.

The protein belongs to the SecD/SecF family. SecF subfamily. Part of the protein translocation apparatus. Forms a complex with SecD.

The protein resides in the cell membrane. In terms of biological role, involved in protein export. This chain is Protein-export membrane protein SecF, found in Methanocaldococcus jannaschii (strain ATCC 43067 / DSM 2661 / JAL-1 / JCM 10045 / NBRC 100440) (Methanococcus jannaschii).